Reading from the N-terminus, the 491-residue chain is Probable glycine dehydrogenase (decarboxylating) subunit 2 (491 aa).

Lys273 carries the post-translational modification N6-(pyridoxal phosphate)lysine.

Belongs to the GcvP family. C-terminal subunit subfamily. In terms of assembly, the glycine cleavage system is composed of four proteins: P, T, L and H. In this organism, the P 'protein' is a heterodimer of two subunits. Requires pyridoxal 5'-phosphate as cofactor.

It carries out the reaction N(6)-[(R)-lipoyl]-L-lysyl-[glycine-cleavage complex H protein] + glycine + H(+) = N(6)-[(R)-S(8)-aminomethyldihydrolipoyl]-L-lysyl-[glycine-cleavage complex H protein] + CO2. In terms of biological role, the glycine cleavage system catalyzes the degradation of glycine. The P protein binds the alpha-amino group of glycine through its pyridoxal phosphate cofactor; CO(2) is released and the remaining methylamine moiety is then transferred to the lipoamide cofactor of the H protein. The protein is Probable glycine dehydrogenase (decarboxylating) subunit 2 of Bacillus anthracis (strain A0248).